Reading from the N-terminus, the 753-residue chain is Probable dipeptidyl peptidase 4 (753 aa).

A signal peptide spans 1–18; the sequence is MKTSQFLSLLLLAGIAQA. 3 N-linked (GlcNAc...) asparagine glycosylation sites follow: asparagine 84, asparagine 114, and asparagine 222. Active-site charge relay system residues include serine 616, aspartate 668, and histidine 703.

The protein belongs to the peptidase S9B family.

It is found in the secreted. It carries out the reaction Release of an N-terminal dipeptide, Xaa-Yaa-|-Zaa-, from a polypeptide, preferentially when Yaa is Pro, provided Zaa is neither Pro nor hydroxyproline.. In terms of biological role, extracellular dipeptidyl-peptidase which removes N-terminal dipeptides sequentially from polypeptides having unsubstituted N-termini provided that the penultimate residue is proline. Contributes to pathogenicity. The protein is Probable dipeptidyl peptidase 4 (DPP4) of Trichophyton verrucosum (strain HKI 0517).